The sequence spans 206 residues: Large ribosomal subunit protein mL40 (206 aa).

The N-terminal 46 residues, 1–46 (MTASVLRSISLALRPTSGLLGTWQTQLRETHQRASLLSFWELIPMR), are a transit peptide targeting the mitochondrion. The segment at 168–192 (LFPFEKEGPHYTPPIPNYQPPEGRY) is disordered.

Belongs to the mitochondrion-specific ribosomal protein mL40 family. As to quaternary structure, component of the mitochondrial large ribosomal subunit (mt-LSU). Mature mammalian 55S mitochondrial ribosomes consist of a small (28S) and a large (39S) subunit. The 28S small subunit contains a 12S ribosomal RNA (12S mt-rRNA) and 30 different proteins. The 39S large subunit contains a 16S rRNA (16S mt-rRNA), a copy of mitochondrial valine transfer RNA (mt-tRNA(Val)), which plays an integral structural role, and 52 different proteins. mL40 binds to the major groove of the anticodon stem of mt-tRNA(Val) in the central protuberance. In terms of tissue distribution, ubiquitous.

Its subcellular location is the mitochondrion. The sequence is that of Large ribosomal subunit protein mL40 (MRPL40) from Homo sapiens (Human).